The following is a 117-amino-acid chain: G antigen 4 (117 aa).

The disordered stretch occupies residues 1–117 (MSWRGRSTYY…PEEGEKQSQC (117 aa)). 2 stretches are compositionally biased toward acidic residues: residues 32-45 (FSDE…EEGE) and 87-96 (ECEDGPDGQE). A compositionally biased stretch (basic and acidic residues) spans 103 to 117 (EEVKTPEEGEKQSQC).

This sequence belongs to the GAGE family. As to expression, expressed in a variety of tumor tissues but not in normal tissues, except testis.

Antigen, recognized on melanoma by autologous cytolytic T-lymphocytes. The sequence is that of G antigen 4 from Homo sapiens (Human).